We begin with the raw amino-acid sequence, 376 residues long: Queuine tRNA-ribosyltransferase (376 aa).

The active-site Proton acceptor is aspartate 93. Residues 93 to 97, aspartate 147, glutamine 191, and glycine 218 contribute to the substrate site; that span reads DSGGF. Positions 249-255 are RNA binding; sequence GVGKPED. The Nucleophile role is filled by aspartate 268. Residues 273-277 are RNA binding; important for wobble base 34 recognition; that stretch reads TRNAR. Residues cysteine 306, cysteine 308, cysteine 311, and histidine 337 each coordinate Zn(2+).

Belongs to the queuine tRNA-ribosyltransferase family. As to quaternary structure, homodimer. Within each dimer, one monomer is responsible for RNA recognition and catalysis, while the other monomer binds to the replacement base PreQ1. Zn(2+) is required as a cofactor.

The catalysed reaction is 7-aminomethyl-7-carbaguanine + guanosine(34) in tRNA = 7-aminomethyl-7-carbaguanosine(34) in tRNA + guanine. Its pathway is tRNA modification; tRNA-queuosine biosynthesis. Functionally, catalyzes the base-exchange of a guanine (G) residue with the queuine precursor 7-aminomethyl-7-deazaguanine (PreQ1) at position 34 (anticodon wobble position) in tRNAs with GU(N) anticodons (tRNA-Asp, -Asn, -His and -Tyr). Catalysis occurs through a double-displacement mechanism. The nucleophile active site attacks the C1' of nucleotide 34 to detach the guanine base from the RNA, forming a covalent enzyme-RNA intermediate. The proton acceptor active site deprotonates the incoming PreQ1, allowing a nucleophilic attack on the C1' of the ribose to form the product. After dissociation, two additional enzymatic reactions on the tRNA convert PreQ1 to queuine (Q), resulting in the hypermodified nucleoside queuosine (7-(((4,5-cis-dihydroxy-2-cyclopenten-1-yl)amino)methyl)-7-deazaguanosine). In Histophilus somni (strain 129Pt) (Haemophilus somnus), this protein is Queuine tRNA-ribosyltransferase.